An 88-amino-acid polypeptide reads, in one-letter code: Small ribosomal subunit protein uS15c (88 aa).

The protein belongs to the universal ribosomal protein uS15 family. As to quaternary structure, part of the 30S ribosomal subunit.

It localises to the plastid. Its subcellular location is the chloroplast. The protein is Small ribosomal subunit protein uS15c (rps15) of Lobularia maritima (Sweet alyssum).